Here is a 2074-residue protein sequence, read N- to C-terminus: Cell adhesion molecule Dscam2 (2074 aa).

The N-terminal stretch at 1 to 21 is a signal peptide; it reads MWISSRFFVILLLLNLDNTCS. At 22 to 1619 the chain is on the extracellular side; that stretch reads EPFEAHLRGP…QTTVIFANIN (1598 aa). Ig-like C2-type domains lie at 31 to 120, 238 to 326, 330 to 417, 422 to 516, 521 to 607, 612 to 698, 707 to 802, and 805 to 902; these read PGFV…RIVS, PSVV…LRLT, PIQV…AELQ, PPVL…ARLN, PYIR…GEVT, PSIE…IKYT, PRWI…LKVN, and PYFS…LQVQ. 8 cysteine pairs are disulfide-bonded: C53/C109, C259/C310, C352/C400, C444/C500, C541/C590, C633/C686, C728/C783, and C826/C884. Fibronectin type-III domains are found at residues 907–1003, 1008–1108, 1113–1211, and 1215–1311; these read PPSV…TEPQ, PPLS…TMED, PPED…SEED, and APAD…TNRI. An Ig-like C2-type 9 domain is found at 1312 to 1400; the sequence is PARIISFGGP…DRLTHTLIVQ (89 aa). Cysteines 1334 and 1382 form a disulfide. Fibronectin type-III domains follow at residues 1402–1495 and 1496–1595; these read PPTA…TQGQ and SPGH…TKDG. A helical transmembrane segment spans residues 1620–1640; that stretch reads LLIPTIAAVSGMFCTIIMIIV. Residues 1641–2074 are Cytoplasmic-facing; sequence CYRHMLKNAP…KFFTAPTLPK (434 aa). Disordered stretches follow at residues 1739–1766, 1778–1917, 1936–1974, and 2011–2074; these read EGCS…HQRP, PFHN…KSIS, SPSI…SLKQ, and PSSQ…TLPK. A compositionally biased stretch (basic residues) spans 1757–1766; the sequence is THHHHHHQRP. Over residues 1831–1846 the composition is skewed to polar residues; that stretch reads AQSSTSSDLSPMSEQK. Over residues 1848-1858 the composition is skewed to basic residues; sequence LPRRGRSRYHH. A compositionally biased stretch (polar residues) spans 1859 to 1868; it reads QQYQFSTNTT. 3 stretches are compositionally biased toward low complexity: residues 1875–1903, 1942–1974, and 2036–2051; these read NKMN…SNSN, QQQK…SLKQ, and SQQS…QQHP. Residues 2055 to 2066 show a composition bias toward polar residues; it reads LNPSTAMLSSKF.

The protein localises to the membrane. Functionally, cell adhesion molecule. The polypeptide is Cell adhesion molecule Dscam2 (Dscam2) (Drosophila melanogaster (Fruit fly)).